We begin with the raw amino-acid sequence, 403 residues long: Phosphoserine phosphatase RsbP (403 aa).

A PAS domain is found at 1 to 42 (MDKQLNDAPCGFLALSEEGSIIAANRTLIKILDYEPEQVIGQ). The PPM-type phosphatase domain occupies 191–402 (QVQIDSYYNA…DDECFILVDV (212 aa)).

The cofactor is Mn(2+).

It catalyses the reaction O-phospho-L-serine + H2O = L-serine + phosphate. The catalysed reaction is O-phospho-D-serine + H2O = D-serine + phosphate. Positive regulator of sigma-B activity. Dephosphorylates RsbV in response to energy stress. This chain is Phosphoserine phosphatase RsbP (rsbP), found in Bacillus subtilis (strain 168).